We begin with the raw amino-acid sequence, 367 residues long: Peptide chain release factor 2 (367 aa).

Position 254 is an N5-methylglutamine (Gln254).

Belongs to the prokaryotic/mitochondrial release factor family. Methylated by PrmC. Methylation increases the termination efficiency of RF2.

It localises to the cytoplasm. Its function is as follows. Peptide chain release factor 2 directs the termination of translation in response to the peptide chain termination codons UGA and UAA. This Acidovorax ebreus (strain TPSY) (Diaphorobacter sp. (strain TPSY)) protein is Peptide chain release factor 2.